Here is a 498-residue protein sequence, read N- to C-terminus: MYNLNALIDRLIEISKNNNLIEDMDTVYTRNRLLSIFNENSYTPCEEKLTLSFHETLNELINIAIEKKIIENALYSKDIFSSDIMNIFLPTPSLINKEFYKRYAISPKESTDYFYSLSKSSNYIRTDRIAKNINFKAPSKYGTMDITINLSKPEKDPKEIALARNSVKSNYPKCLLCIENEGYEGTVTHPDRANHRMIRLSLNDRTWMLQYSPYLYYNEHCIILSEDHVPMKIDISTFKNLLSFVDKFPHYFAGSNADLPIVGGSILSHEHYQGGNHRFPMNDAKKLFDFSIDGFEDVECEAIKWPISTIRLRGENIDSLVLASDLILKKWRDYSDETLDILSYSNSEMHNTITPMVRKEDGKFVVDLSLRNNRTSKEHPLGIFHPHEEVHHIKKENIGLIEVMGLAVLPGRLLKELEKIKEYLRDEISLDNIEEYHRPWALELKKKFDYLKSATDLNDFVNKELSNKFVSVLEHCGVFKLNEEGLEGFKRFTNSLNN.

The protein belongs to the galactose-1-phosphate uridylyltransferase type 2 family.

Its subcellular location is the cytoplasm. It catalyses the reaction alpha-D-galactose 1-phosphate + UDP-alpha-D-glucose = alpha-D-glucose 1-phosphate + UDP-alpha-D-galactose. Its pathway is carbohydrate metabolism; galactose metabolism. The chain is Galactose-1-phosphate uridylyltransferase from Clostridium perfringens (strain SM101 / Type A).